The chain runs to 191 residues: Threonylcarbamoyl-AMP synthase (191 aa).

Positions 10 to 191 constitute a YrdC-like domain; it reads PFRVRHAAAE…DGRSGAYLRR (182 aa).

Belongs to the SUA5 family. TsaC subfamily.

The protein localises to the cytoplasm. It catalyses the reaction L-threonine + hydrogencarbonate + ATP = L-threonylcarbamoyladenylate + diphosphate + H2O. Required for the formation of a threonylcarbamoyl group on adenosine at position 37 (t(6)A37) in tRNAs that read codons beginning with adenine. Catalyzes the conversion of L-threonine, HCO(3)(-)/CO(2) and ATP to give threonylcarbamoyl-AMP (TC-AMP) as the acyladenylate intermediate, with the release of diphosphate. The polypeptide is Threonylcarbamoyl-AMP synthase (Halorhodospira halophila (strain DSM 244 / SL1) (Ectothiorhodospira halophila (strain DSM 244 / SL1))).